The following is a 213-amino-acid chain: Probable transaldolase (213 aa).

The active-site Schiff-base intermediate with substrate is lysine 83.

This sequence belongs to the transaldolase family. Type 3B subfamily.

The protein resides in the cytoplasm. It catalyses the reaction D-sedoheptulose 7-phosphate + D-glyceraldehyde 3-phosphate = D-erythrose 4-phosphate + beta-D-fructose 6-phosphate. Its pathway is carbohydrate degradation; pentose phosphate pathway; D-glyceraldehyde 3-phosphate and beta-D-fructose 6-phosphate from D-ribose 5-phosphate and D-xylulose 5-phosphate (non-oxidative stage): step 2/3. In terms of biological role, transaldolase is important for the balance of metabolites in the pentose-phosphate pathway. The polypeptide is Probable transaldolase (Geobacillus sp. (strain WCH70)).